Here is a 264-residue protein sequence, read N- to C-terminus: MKKLKLHGFNNLTKSLSFCIYDICYAKTAEERDGYIAYIDELYNANRLTEILSETCSIIGANILNIARQDYEPQGASVTILVSEEPIDPKLIDQTEHPGPLPETVVAHLDKSHICVHTYPESHPEGGLCTFRADIEVSTCGVISPLKALNYLIHQLESDIVTIDYRVRGFTRDVNGMKHFIDHEINSIQNFMSEDMKSLYDMVDVNVYQENIFHTKMLLKEFDLKHYMFHTKPEDLTETERQEITAALWKEMREIYYGRNISAV.

The active-site Schiff-base intermediate with substrate; via pyruvic acid is the serine 112. A Pyruvic acid (Ser); by autocatalysis modification is found at serine 112. Histidine 117 (proton acceptor; for processing activity) is an active-site residue. The active-site Proton donor; for catalytic activity is cysteine 140.

This sequence belongs to the prokaryotic AdoMetDC family. Type 2 subfamily. Heterooctamer of four alpha and four beta chains arranged as a tetramer of alpha/beta heterodimers. Pyruvate serves as cofactor. Is synthesized initially as an inactive proenzyme. Formation of the active enzyme involves a self-maturation process in which the active site pyruvoyl group is generated from an internal serine residue via an autocatalytic post-translational modification. Two non-identical subunits are generated from the proenzyme in this reaction, and the pyruvate is formed at the N-terminus of the alpha chain, which is derived from the carboxyl end of the proenzyme. The post-translation cleavage follows an unusual pathway, termed non-hydrolytic serinolysis, in which the side chain hydroxyl group of the serine supplies its oxygen atom to form the C-terminus of the beta chain, while the remainder of the serine residue undergoes an oxidative deamination to produce ammonia and the pyruvoyl group blocking the N-terminus of the alpha chain.

The enzyme catalyses S-adenosyl-L-methionine + H(+) = S-adenosyl 3-(methylsulfanyl)propylamine + CO2. It participates in amine and polyamine biosynthesis; S-adenosylmethioninamine biosynthesis; S-adenosylmethioninamine from S-adenosyl-L-methionine: step 1/1. Catalyzes the decarboxylation of S-adenosylmethionine to S-adenosylmethioninamine (dcAdoMet), the propylamine donor required for the synthesis of the polyamines spermine and spermidine from the diamine putrescine. This Salmonella agona (strain SL483) protein is S-adenosylmethionine decarboxylase proenzyme.